We begin with the raw amino-acid sequence, 407 residues long: Imidazolonepropionase (407 aa).

Residues His68 and His70 each contribute to the Fe(3+) site. Positions 68 and 70 each coordinate Zn(2+). 4-imidazolone-5-propanoate is bound by residues Arg77, Tyr140, and His173. N-formimidoyl-L-glutamate is bound at residue Tyr140. His238 serves as a coordination point for Fe(3+). A Zn(2+)-binding site is contributed by His238. Gln241 lines the 4-imidazolone-5-propanoate pocket. Residue Asp313 coordinates Fe(3+). Residue Asp313 participates in Zn(2+) binding. 2 residues coordinate N-formimidoyl-L-glutamate: Asn315 and Gly317. Thr318 serves as a coordination point for 4-imidazolone-5-propanoate.

Belongs to the metallo-dependent hydrolases superfamily. HutI family. The cofactor is Zn(2+). It depends on Fe(3+) as a cofactor.

It localises to the cytoplasm. It carries out the reaction 4-imidazolone-5-propanoate + H2O = N-formimidoyl-L-glutamate. Its pathway is amino-acid degradation; L-histidine degradation into L-glutamate; N-formimidoyl-L-glutamate from L-histidine: step 3/3. Functionally, catalyzes the hydrolytic cleavage of the carbon-nitrogen bond in imidazolone-5-propanoate to yield N-formimidoyl-L-glutamate. It is the third step in the universal histidine degradation pathway. The sequence is that of Imidazolonepropionase from Burkholderia lata (strain ATCC 17760 / DSM 23089 / LMG 22485 / NCIMB 9086 / R18194 / 383).